The primary structure comprises 298 residues: GTP cyclohydrolase FolE2 (298 aa).

The protein belongs to the GTP cyclohydrolase IV family.

The catalysed reaction is GTP + H2O = 7,8-dihydroneopterin 3'-triphosphate + formate + H(+). The protein operates within cofactor biosynthesis; 7,8-dihydroneopterin triphosphate biosynthesis; 7,8-dihydroneopterin triphosphate from GTP: step 1/1. Converts GTP to 7,8-dihydroneopterin triphosphate. The chain is GTP cyclohydrolase FolE2 from Pseudomonas fluorescens (strain SBW25).